A 270-amino-acid chain; its full sequence is Bis(5'-nucleosyl)-tetraphosphatase, symmetrical (270 aa).

Belongs to the Ap4A hydrolase family.

It carries out the reaction P(1),P(4)-bis(5'-adenosyl) tetraphosphate + H2O = 2 ADP + 2 H(+). Functionally, hydrolyzes diadenosine 5',5'''-P1,P4-tetraphosphate to yield ADP. This Actinobacillus pleuropneumoniae serotype 5b (strain L20) protein is Bis(5'-nucleosyl)-tetraphosphatase, symmetrical.